A 380-amino-acid polypeptide reads, in one-letter code: Alanine racemase (380 aa).

The active-site Proton acceptor; specific for D-alanine is the lysine 39. Lysine 39 bears the N6-(pyridoxal phosphate)lysine mark. Position 137 (arginine 137) interacts with substrate. The Proton acceptor; specific for L-alanine role is filled by tyrosine 263. Substrate is bound at residue methionine 310.

Belongs to the alanine racemase family. Requires pyridoxal 5'-phosphate as cofactor.

The enzyme catalyses L-alanine = D-alanine. Its pathway is amino-acid biosynthesis; D-alanine biosynthesis; D-alanine from L-alanine: step 1/1. Its function is as follows. Catalyzes the interconversion of L-alanine and D-alanine. May also act on other amino acids. The sequence is that of Alanine racemase (alr) from Macrococcus caseolyticus (strain JCSC5402) (Macrococcoides caseolyticum).